The chain runs to 556 residues: Dihydroxy-acid dehydratase (556 aa).

Aspartate 81 is a binding site for Mg(2+). Position 122 (cysteine 122) interacts with [2Fe-2S] cluster. The Mg(2+) site is built by aspartate 123 and lysine 124. An N6-carboxylysine modification is found at lysine 124. Cysteine 196 lines the [2Fe-2S] cluster pocket. Glutamate 444 contributes to the Mg(2+) binding site. Serine 470 acts as the Proton acceptor in catalysis.

The protein belongs to the IlvD/Edd family. As to quaternary structure, homodimer. Requires [2Fe-2S] cluster as cofactor. It depends on Mg(2+) as a cofactor.

It carries out the reaction (2R)-2,3-dihydroxy-3-methylbutanoate = 3-methyl-2-oxobutanoate + H2O. The enzyme catalyses (2R,3R)-2,3-dihydroxy-3-methylpentanoate = (S)-3-methyl-2-oxopentanoate + H2O. Its pathway is amino-acid biosynthesis; L-isoleucine biosynthesis; L-isoleucine from 2-oxobutanoate: step 3/4. It functions in the pathway amino-acid biosynthesis; L-valine biosynthesis; L-valine from pyruvate: step 3/4. Functions in the biosynthesis of branched-chain amino acids. Catalyzes the dehydration of (2R,3R)-2,3-dihydroxy-3-methylpentanoate (2,3-dihydroxy-3-methylvalerate) into 2-oxo-3-methylpentanoate (2-oxo-3-methylvalerate) and of (2R)-2,3-dihydroxy-3-methylbutanoate (2,3-dihydroxyisovalerate) into 2-oxo-3-methylbutanoate (2-oxoisovalerate), the penultimate precursor to L-isoleucine and L-valine, respectively. The polypeptide is Dihydroxy-acid dehydratase (Syntrophotalea carbinolica (strain DSM 2380 / NBRC 103641 / GraBd1) (Pelobacter carbinolicus)).